Here is a 652-residue protein sequence, read N- to C-terminus: MSSEQPAWTFGLFTPDQNKQAPLEMNENAINSLYEAIPLPQDGSSNGQRQEDRQANSFELKRETLVATDPPRPTINLDPRVSIYSGRRPLLSRTNIQGRVYNFLERPTGWKCFVYHFTVFLIVLICLIFSVLSTIQQYNNLATETLFWMEIVLVVFFGAEYVVRLWSAGCRSKYVGVWGRLRFARKPISVIDLIVVVASVIVLCVGSNGQVFATSAIRGIRFLQILRMLHVDRQGGTWRLLGSVVFIHRQELITTLYIGFLGLIFSSYFVYLAEKDAIDSSGEYQFGSYADALWWGVVTVTTIGYGDKVPQTWIGKTIASCFSVFAISFFALPAGILGSGFALKVQQKQRQKHFNRQIPAAASLIQTAWRCYAAENPDSATWKIYIRKQSRNHHLMSPSPKPKKSAMVKKKKIRTERDEGSTDKMLNIPHITYDHVADDRKNDGYSVESYENTVRKPFGFLDPSTGPFIRTSSFTDDLDMEGDTLLTPITHISELKEHHRAAIKVIRRMQYFVAKKKFQQARKPYDVRDVIEQYSQGHLNLMVRIKELQRRLDQSLGKPSLFLSVSDKVKDKGINTIGSRLNRVEDKVTQMDHKLNLITDMLHHLLTNQQGSQSIRTPHRSNSLNSENHPSRNTLPTYEQLNVPRMTQDNIS.

At 1 to 110 (MSSEQPAWTF…YNFLERPTGW (110 aa)) the chain is on the cytoplasmic side. A helical transmembrane segment spans residues 111–132 (KCFVYHFTVFLIVLICLIFSVL). Residues 133–143 (STIQQYNNLAT) lie on the Extracellular side of the membrane. Residues 144 to 166 (ETLFWMEIVLVVFFGAEYVVRLW) form a helical membrane-spanning segment. The Cytoplasmic portion of the chain corresponds to 167-182 (SAGCRSKYVGVWGRLR). The chain crosses the membrane as a helical span at residues 183 to 208 (FARKPISVIDLIVVVASVIVLCVGSN). At 209–216 (GQVFATSA) the chain is on the extracellular side. The helical; Voltage-sensor transmembrane segment at 217–232 (IRGIRFLQILRMLHVD) threads the bilayer. Residues 228–236 (MLHVDRQGG) form an interaction with KCNE3 region. Over 233 to 250 (RQGGTWRLLGSVVFIHRQ) the chain is Cytoplasmic. Gln-234 contributes to the a 1,2-diacyl-sn-glycero-3-phospho-(1D-myo-inositol-4,5-bisphosphate) binding site. A helical membrane pass occupies residues 251-273 (ELITTLYIGFLGLIFSSYFVYLA). The Extracellular segment spans residues 274-289 (EKDAIDSSGEYQFGSY). The segment at residues 290-310 (ADALWWGVVTVTTIGYGDKVP) is an intramembrane region (pore-forming). Over 311–312 (QT) the chain is Extracellular. Residues 313–338 (WIGKTIASCFSVFAISFFALPAGILG) traverse the membrane as a helical segment. Topologically, residues 339-652 (SGFALKVQQK…VPRMTQDNIS (314 aa)) are cytoplasmic. The segment at 360–372 (AAASLIQTAWRCY) is interaction with CALM. The interval 393–419 (HHLMSPSPKPKKSAMVKKKKIRTERDE) is disordered. The segment covering 401 to 414 (KPKKSAMVKKKKIR) has biased composition (basic residues). Positions 504–518 (KVIRRMQYFVAKKKF) are interaction with CALM; calcium-dependent. An interaction with KCNE1 C-terminus region spans residues 524-561 (PYDVRDVIEQYSQGHLNLMVRIKELQRRLDQSLGKPSL). Residues 577 to 605 (IGSRLNRVEDKVTQMDHKLNLITDMLHHL) form an interaction with AKAP9 region. The interval 578–609 (GSRLNRVEDKVTQMDHKLNLITDMLHHLLTNQ) is C-terminal assembly domain (tetramerization). The segment at 609–652 (QQGSQSIRTPHRSNSLNSENHPSRNTLPTYEQLNVPRMTQDNIS) is disordered.

The protein belongs to the potassium channel family. KQT (TC 1.A.1.15) subfamily. Kv7.1/KCNQ1 sub-subfamily. As to quaternary structure, tetramer. Heterotetramer with KCNE1; targets to the membrane raft. Interacts (via C-terminus) with CALM; forms a heterotetramer in a calcium-independent manner. Interacts with KCNE2; form a heterooligomer complex that targets to the membrane raft and leading to currents with an apparently instantaneous activation, a rapid deactivation process and a linear current-voltage relationship and decreases the amplitude of the outward current. Interacts with KCNE3; four KCNE3 molecules are bound to one KCNQ1 tetramer (4:4 KCNQ1:KCNE3 stoichiometry); alters membrane raft localization; affects KCNQ1 structure and gating properties. Interacts with KCNE4; impairs KCNQ1 localization in lipid rafts and inhibits voltage-gated potassium channel activity. Interacts with KCNE5; impairs KCNQ1 localization in lipid rafts and only conducts current upon strong and continued depolarization.

Its subcellular location is the cell membrane. It localises to the cytoplasmic vesicle membrane. It is found in the membrane raft. The protein resides in the endoplasmic reticulum. The protein localises to the basolateral cell membrane. It carries out the reaction K(+)(in) = K(+)(out). Its activity is regulated as follows. PIP2 molecule is essential to activate KCNQ channels by inducing the coupling of the voltage-sensing domain (VSD) and the pore-forming domain (PD). Upon channel activation, PIP2 disrupts the VSD-calmodulin/CALM interactions, causing the release of CALM from the VSD which triggers the opening of the gate. Calcium potentiates KCNQ1 channel current through calcium-bound CALM. Calcium-bound CALM competes with PIP2 to stabilize the channel open state. In terms of biological role, pore-forming subunit of the voltage-gated potassium (Kv) channel involved in the regulation of cardiomyocyte excitability and important in normal development and functions of myocardium, inner ear, stomach and colon. Associates with KCNE beta subunits that modulates current kinetics. Induces a voltage-dependent by rapidly activating and slowly deactivating potassium-selective outward current. Also promotes a delayed voltage activated potassium current showing outward rectification characteristic. During beta-adrenergic receptor stimulation participates in cardiac repolarization by associating with KCNE1 to form the I(Ks) cardiac potassium current that increases the amplitude and slows down the activation kinetics of outward potassium current I(Ks). When associated with KCNE3, forms the potassium channel that is important for cyclic AMP-stimulated intestinal secretion of chloride ions. When associated with KCNE2, forms a heterooligomer complex leading to currents with an apparently instantaneous activation, a rapid deactivation process and a linear current-voltage relationship and decreases the amplitude of the outward current. When associated with KCNE4, inhibits voltage-gated potassium channel activity. When associated with KCNE5, this complex only conducts current upon strong and continued depolarization. The polypeptide is Potassium voltage-gated channel subfamily KQT member 1 (Xenopus laevis (African clawed frog)).